The primary structure comprises 396 residues: Purine ribonucleoside efflux pump NepI (396 aa).

Residues Met-1–Ala-21 lie on the Cytoplasmic side of the membrane. Residues Val-22–Leu-42 traverse the membrane as a helical segment. Topologically, residues Leu-43–Glu-54 are periplasmic. Residues Gly-55 to Ile-75 form a helical membrane-spanning segment. The Cytoplasmic segment spans residues Thr-76–Arg-85. A helical membrane pass occupies residues Tyr-86–Asn-106. Residue Ser-107 is a topological domain, periplasmic. Residues Phe-108–Met-128 form a helical membrane-spanning segment. Residues Ser-129–Ser-147 are Cytoplasmic-facing. Residues Val-148–Gly-168 form a helical membrane-spanning segment. The Periplasmic segment spans residues Glu-169–Asn-175. The chain crosses the membrane as a helical span at residues Val-176–Pro-196. At Ser-197–Arg-215 the chain is on the cytoplasmic side. A helical membrane pass occupies residues Pro-216–Phe-236. Residues Thr-237–Thr-255 are Periplasmic-facing. The helical transmembrane segment at Leu-256–Leu-276 threads the bilayer. At Lys-277–Lys-281 the chain is on the cytoplasmic side. A helical membrane pass occupies residues Leu-282 to Gly-302. Residues Ser-303 to Lys-305 are Periplasmic-facing. Residues Ile-306–Trp-326 traverse the membrane as a helical segment. The Cytoplasmic segment spans residues Ser-327–Ser-343. A helical membrane pass occupies residues Ile-344–Leu-364. Residues Asp-365 to Asn-366 lie on the Periplasmic side of the membrane. A helical membrane pass occupies residues Ile-367–Val-387. At Thr-388–Ser-396 the chain is on the cytoplasmic side.

This sequence belongs to the major facilitator superfamily. DHA1 family. NepI (TC 2.A.1.2.26) subfamily.

It is found in the cell inner membrane. It carries out the reaction inosine(in) + H(+)(out) = inosine(out) + H(+)(in). The enzyme catalyses guanosine(in) + H(+)(out) = guanosine(out) + H(+)(in). Its function is as follows. Involved in the efflux of purine ribonucleosides, such as inosine and guanosine. The protein is Purine ribonucleoside efflux pump NepI of Escherichia coli O6:H1 (strain CFT073 / ATCC 700928 / UPEC).